The primary structure comprises 426 residues: mRNA cap guanine-N(7) methyltransferase (426 aa).

Residues 138-421 enclose the mRNA cap 0 methyltransferase domain; that stretch reads SPIIKLRNFN…FYTTFAFRKV (284 aa). 147-148 is an mRNA binding site; that stretch reads NN. S-adenosyl-L-methionine is bound by residues Lys151, Ala169, Asp191, Asp220, Gln246, and Tyr251.

Belongs to the class I-like SAM-binding methyltransferase superfamily. mRNA cap 0 methyltransferase family.

It localises to the nucleus. The enzyme catalyses a 5'-end (5'-triphosphoguanosine)-ribonucleoside in mRNA + S-adenosyl-L-methionine = a 5'-end (N(7)-methyl 5'-triphosphoguanosine)-ribonucleoside in mRNA + S-adenosyl-L-homocysteine. Functionally, responsible for methylating the 5'-cap structure of mRNAs. The chain is mRNA cap guanine-N(7) methyltransferase (ABD1) from Kluyveromyces lactis (strain ATCC 8585 / CBS 2359 / DSM 70799 / NBRC 1267 / NRRL Y-1140 / WM37) (Yeast).